The sequence spans 343 residues: tRNA N6-adenosine threonylcarbamoyltransferase (343 aa).

H114 and H118 together coordinate Fe cation. Residues 137 to 141, D171, G184, D188, and N278 each bind substrate; that span reads LVSGG. D306 serves as a coordination point for Fe cation.

This sequence belongs to the KAE1 / TsaD family. Fe(2+) serves as cofactor.

The protein resides in the cytoplasm. The enzyme catalyses L-threonylcarbamoyladenylate + adenosine(37) in tRNA = N(6)-L-threonylcarbamoyladenosine(37) in tRNA + AMP + H(+). Functionally, required for the formation of a threonylcarbamoyl group on adenosine at position 37 (t(6)A37) in tRNAs that read codons beginning with adenine. Is involved in the transfer of the threonylcarbamoyl moiety of threonylcarbamoyl-AMP (TC-AMP) to the N6 group of A37, together with TsaE and TsaB. TsaD likely plays a direct catalytic role in this reaction. This chain is tRNA N6-adenosine threonylcarbamoyltransferase, found in Acidothermus cellulolyticus (strain ATCC 43068 / DSM 8971 / 11B).